A 433-amino-acid chain; its full sequence is N-lysine methyltransferase SMYD2 (433 aa).

Residues 7 to 241 (GGLERFCSAG…PGDEVFTSYI (235 aa)) enclose the SET domain. An S-adenosyl-L-methionine-binding site is contributed by 17–19 (KGR). Residues C52, C55, C65, C68, C74, C78, H86, and C90 each coordinate Zn(2+). The segment at 52–90 (CECCFARKEGLSKCGRCKQAFYCDVECQKEDWPLHKLEC) adopts an MYND-type zinc-finger fold. S-adenosyl-L-methionine-binding positions include H137, 206–207 (NH), and 258–260 (YFF). S283 carries the post-translational modification Phosphoserine.

This sequence belongs to the class V-like SAM-binding methyltransferase superfamily. As to quaternary structure, interacts with RNA polymerase II and HELZ. Interacts with SIN3A and HDAC1. Interacts (via MYND-type zinc finger) with EPB41L3. Interacts (via SET domain) with p53/TP53. Interacts with RB1 and HSP90AA1.

The protein localises to the cytoplasm. It localises to the cytosol. It is found in the nucleus. It carries out the reaction L-lysyl(4)-[histone H3] + 3 S-adenosyl-L-methionine = N(6),N(6),N(6)-trimethyl-L-lysyl(4)-[histone H3] + 3 S-adenosyl-L-homocysteine + 3 H(+). The catalysed reaction is L-lysyl-[protein] + S-adenosyl-L-methionine = N(6)-methyl-L-lysyl-[protein] + S-adenosyl-L-homocysteine + H(+). Protein-lysine N-methyltransferase that methylates both histones and non-histone proteins, including p53/TP53 and RB1. Specifically trimethylates histone H3 'Lys-4' (H3K4me3) in vivo. The activity requires interaction with HSP90alpha. Shows even higher methyltransferase activity on p53/TP53. Monomethylates 'Lys-370' of p53/TP53, leading to decreased DNA-binding activity and subsequent transcriptional regulation activity of p53/TP53. Monomethylates RB1 at 'Lys-860'. The protein is N-lysine methyltransferase SMYD2 (Smyd2) of Rattus norvegicus (Rat).